The following is a 260-amino-acid chain: 3-alpha-(or 20-beta)-hydroxysteroid dehydrogenase (260 aa).

The NAD(+) site is built by Arg17, Met19, Asp38, Asp61, Val62, Asn88, Tyr153, Lys157, Val186, Thr188, and Thr191. Catalysis depends on Tyr153, which acts as the Proton acceptor.

This sequence belongs to the short-chain dehydrogenases/reductases (SDR) family. As to quaternary structure, homotetramer.

It catalyses the reaction androstan-3alpha,17beta-diol + NAD(+) = 17beta-hydroxyandrostanone + NADH + H(+). It participates in lipid metabolism; steroid degradation. Its function is as follows. Probably involved in steroid metabolism. This Mycobacterium bovis (strain ATCC BAA-935 / AF2122/97) protein is 3-alpha-(or 20-beta)-hydroxysteroid dehydrogenase (fabG3).